Here is a 117-residue protein sequence, read N- to C-terminus: B-box domain protein 30 (117 aa).

A B box-type; atypical zinc finger spans residues 27–73 (KAPVSCELCGENATVYCEADAAFLCRKCDRWVHSANFLARRHLRRVI). Zn(2+) contacts are provided by C32, C35, C54, and H59. A PFVFL motif is present at residues 113–117 (PFVFL).

Interacts with CO (via B-box) and with TPL (via PFVFL motif). In terms of tissue distribution, highly expressed in shoot apical meristems and in vascular tissues of leaves. Also detected in petioles.

The protein resides in the nucleus. Its function is as follows. Developmental regulator acting by forming heterodimeric complexes, that sequester CO and CO-like (COL) proteins into non-functional complexes. Engages CO and the transcriptional repressor TPL in a tripartite complex. Involved in the CO-mediated long-day flowering-promotion pathway. In Arabidopsis thaliana (Mouse-ear cress), this protein is B-box domain protein 30.